The chain runs to 444 residues: Methylenetetrahydrofolate--tRNA-(uracil-5-)-methyltransferase TrmFO (444 aa).

Position 10-15 (10-15) interacts with FAD; it reads GAGLAG.

The protein belongs to the MnmG family. TrmFO subfamily. FAD is required as a cofactor.

It localises to the cytoplasm. It catalyses the reaction uridine(54) in tRNA + (6R)-5,10-methylene-5,6,7,8-tetrahydrofolate + NADH + H(+) = 5-methyluridine(54) in tRNA + (6S)-5,6,7,8-tetrahydrofolate + NAD(+). The enzyme catalyses uridine(54) in tRNA + (6R)-5,10-methylene-5,6,7,8-tetrahydrofolate + NADPH + H(+) = 5-methyluridine(54) in tRNA + (6S)-5,6,7,8-tetrahydrofolate + NADP(+). In terms of biological role, catalyzes the folate-dependent formation of 5-methyl-uridine at position 54 (M-5-U54) in all tRNAs. This is Methylenetetrahydrofolate--tRNA-(uracil-5-)-methyltransferase TrmFO from Streptococcus sanguinis (strain SK36).